The primary structure comprises 341 residues: Aspartate carbamoyltransferase catalytic subunit (341 aa).

Residues R89 and T90 each coordinate carbamoyl phosphate. K117 lines the L-aspartate pocket. R139, H169, and Q172 together coordinate carbamoyl phosphate. Residues R202 and R257 each coordinate L-aspartate. Carbamoyl phosphate contacts are provided by G298 and P299.

This sequence belongs to the aspartate/ornithine carbamoyltransferase superfamily. ATCase family. In terms of assembly, heterododecamer (2C3:3R2) of six catalytic PyrB chains organized as two trimers (C3), and six regulatory PyrI chains organized as three dimers (R2).

It carries out the reaction carbamoyl phosphate + L-aspartate = N-carbamoyl-L-aspartate + phosphate + H(+). The protein operates within pyrimidine metabolism; UMP biosynthesis via de novo pathway; (S)-dihydroorotate from bicarbonate: step 2/3. Its function is as follows. Catalyzes the condensation of carbamoyl phosphate and aspartate to form carbamoyl aspartate and inorganic phosphate, the committed step in the de novo pyrimidine nucleotide biosynthesis pathway. This is Aspartate carbamoyltransferase catalytic subunit from Paraburkholderia xenovorans (strain LB400).